A 166-amino-acid chain; its full sequence is Large ribosomal subunit protein uL10 (166 aa).

As to quaternary structure, part of the ribosomal stalk of the 50S ribosomal subunit. The N-terminus interacts with L11 and 23S rRNA to form the base of the stalk. The C-terminus forms an elongated spine to which L12 dimers bind in a sequential fashion forming a pentameric L10(L12)2(L12)2 complex.

Its function is as follows. Forms part of the ribosomal stalk, playing a central role in the interaction of the ribosome with GTP-bound translation factors (such as IF-2, EF-Tu, EF-G and RF3). This Bacillus subtilis (strain 168) protein is Large ribosomal subunit protein uL10 (rplJ).